The chain runs to 369 residues: Dual-specificity RNA methyltransferase RlmN (369 aa).

Residue Glu94 is the Proton acceptor of the active site. The Radical SAM core domain maps to 113-346 (ESEKWTMCLS…CTIRESRGID (234 aa)). Cys120 and Cys351 are oxidised to a cystine. Cys127, Cys131, and Cys134 together coordinate [4Fe-4S] cluster. S-adenosyl-L-methionine-binding positions include 177–178 (GE), Ser209, 232–234 (SLH), and Asn308. Cys351 (S-methylcysteine intermediate) is an active-site residue.

Belongs to the radical SAM superfamily. RlmN family. Requires [4Fe-4S] cluster as cofactor.

The protein localises to the cytoplasm. It catalyses the reaction adenosine(2503) in 23S rRNA + 2 reduced [2Fe-2S]-[ferredoxin] + 2 S-adenosyl-L-methionine = 2-methyladenosine(2503) in 23S rRNA + 5'-deoxyadenosine + L-methionine + 2 oxidized [2Fe-2S]-[ferredoxin] + S-adenosyl-L-homocysteine. It carries out the reaction adenosine(37) in tRNA + 2 reduced [2Fe-2S]-[ferredoxin] + 2 S-adenosyl-L-methionine = 2-methyladenosine(37) in tRNA + 5'-deoxyadenosine + L-methionine + 2 oxidized [2Fe-2S]-[ferredoxin] + S-adenosyl-L-homocysteine. In terms of biological role, specifically methylates position 2 of adenine 2503 in 23S rRNA and position 2 of adenine 37 in tRNAs. m2A2503 modification seems to play a crucial role in the proofreading step occurring at the peptidyl transferase center and thus would serve to optimize ribosomal fidelity. This is Dual-specificity RNA methyltransferase RlmN from Helicobacter hepaticus (strain ATCC 51449 / 3B1).